The primary structure comprises 238 residues: Type III pantothenate kinase (238 aa).

6-13 serves as a coordination point for ATP; sequence DSGNTRIK. Substrate contacts are provided by residues Y90 and 97 to 100; that span reads GVDR. The Proton acceptor role is filled by D99. Residue T122 coordinates ATP. T172 provides a ligand contact to substrate.

The protein belongs to the type III pantothenate kinase family. Homodimer. It depends on NH4(+) as a cofactor. K(+) is required as a cofactor.

The protein resides in the cytoplasm. The catalysed reaction is (R)-pantothenate + ATP = (R)-4'-phosphopantothenate + ADP + H(+). The protein operates within cofactor biosynthesis; coenzyme A biosynthesis; CoA from (R)-pantothenate: step 1/5. Functionally, catalyzes the phosphorylation of pantothenate (Pan), the first step in CoA biosynthesis. This Dechloromonas aromatica (strain RCB) protein is Type III pantothenate kinase.